Here is a 370-residue protein sequence, read N- to C-terminus: Glutamate 5-kinase (370 aa).

Lysine 11 contacts ATP. The substrate site is built by serine 52, aspartate 139, and asparagine 151. Residues 171 to 172 (TD) and 213 to 219 (TGGMATK) contribute to the ATP site. One can recognise a PUA domain in the interval 278-356 (TGKLLLDAGA…DQIVQILGYE (79 aa)).

This sequence belongs to the glutamate 5-kinase family.

Its subcellular location is the cytoplasm. It catalyses the reaction L-glutamate + ATP = L-glutamyl 5-phosphate + ADP. The protein operates within amino-acid biosynthesis; L-proline biosynthesis; L-glutamate 5-semialdehyde from L-glutamate: step 1/2. In terms of biological role, catalyzes the transfer of a phosphate group to glutamate to form L-glutamate 5-phosphate. The chain is Glutamate 5-kinase from Synechococcus sp. (strain ATCC 27144 / PCC 6301 / SAUG 1402/1) (Anacystis nidulans).